The sequence spans 278 residues: Putative non-heme haloperoxidase (278 aa).

The AB hydrolase-1 domain occupies 24–240 (PLVFLHGLSV…STAKITNASF (217 aa)). Catalysis depends on residues Ser97 and Asp221.

Belongs to the AB hydrolase superfamily.

The chain is Putative non-heme haloperoxidase (59.2) from Mycobacterium (Mycobacteriophage D29).